Consider the following 258-residue polypeptide: UPF0246 protein Pnap_3166 (258 aa).

The protein belongs to the UPF0246 family.

This is UPF0246 protein Pnap_3166 from Polaromonas naphthalenivorans (strain CJ2).